The sequence spans 752 residues: Mitochondrial Rho GTPase 1 (752 aa).

Residues 1–671 lie on the Cytoplasmic side of the membrane; that stretch reads MRKDVRIVLA…RNALSYGTNR (671 aa). Residues 2–170 form the Miro 1 domain; that stretch reads RKDVRIVLAG…FYFAQKAVLY (169 aa). Residues 11–18, 57–61, and 115–118 contribute to the GTP site; these read GDPDVGKS, DTSSS, and NKID. EF-hand domains are found at residues 186 to 221 and 333 to 368; these read ACVDALKRIFRLCDSDKDGLLSDGELNDFQRKCFDT and NGYQFLTDIFEVHDKDRDGALSEEELDSLFITAPDN. Ca(2+)-binding residues include Asp-199, Asp-201, Asp-203, Glu-210, Asp-346, Asp-348, Asp-350, and Glu-357. A disordered region spans residues 426-460; the sequence is SSGSASTPAPIPLTPTGPPGSRPSRNRTPCPPSTI. The span at 434-446 shows a compositional bias: pro residues; sequence APIPLTPTGPPGS. The Miro 2 domain maps to 481–651; that stretch reads RSVFLGFVLG…YGLICTIAVD (171 aa). GTP is bound by residues 490-497, 526-530, and 595-598; these read GAAGSGKT, EQAGA, and TKAD. A helical; Anchor for type IV membrane protein transmembrane segment spans residues 672–692; sequence WQFWGYIGLVVIGGGGAVWIC. At 693–752 the chain is on the mitochondrial intermembrane side; the sequence is AKVLKVPIGSTLGFGSSASTTSWWLSGAQARGAGGPNATKVSSWFDWIRWQSSSNVRSEL.

It belongs to the mitochondrial Rho GTPase family.

It localises to the mitochondrion outer membrane. Mitochondrial GTPase involved in mitochondrial trafficking. Probably involved in control of anterograde transport of mitochondria and their subcellular distribution. This Mycosarcoma maydis (Corn smut fungus) protein is Mitochondrial Rho GTPase 1 (GEM1).